Reading from the N-terminus, the 401-residue chain is Lsg locus putative protein 1 (401 aa).

11 consecutive transmembrane segments (helical) span residues 8–28, 36–56, 87–107, 132–152, 162–182, 199–219, 237–257, 282–302, 320–340, 352–372, and 374–394; these read VIYL…LPYL, GYGS…VVSL, IIGS…LFYA, SYAF…VALL, KRIL…YFLY, ALFY…SFFL, LGLY…IQAL, WALF…IIPE, FILF…VNYL, CSVL…FTEI, and YIPY…YFMT.

It belongs to the polysaccharide synthase family. HI_0867/HI_1700 subfamily.

Its subcellular location is the cell membrane. The protein is Lsg locus putative protein 1 of Haemophilus influenzae (strain ATCC 51907 / DSM 11121 / KW20 / Rd).